We begin with the raw amino-acid sequence, 597 residues long: Elongation factor 4 (597 aa).

The region spanning 4-181 is the tr-type G domain; that stretch reads SKIRNFSIIA…EIVDKISYPI (178 aa). GTP contacts are provided by residues 16–21 and 128–131; these read DHGKST and NKID.

The protein belongs to the TRAFAC class translation factor GTPase superfamily. Classic translation factor GTPase family. LepA subfamily.

It is found in the cell membrane. It carries out the reaction GTP + H2O = GDP + phosphate + H(+). Required for accurate and efficient protein synthesis under certain stress conditions. May act as a fidelity factor of the translation reaction, by catalyzing a one-codon backward translocation of tRNAs on improperly translocated ribosomes. Back-translocation proceeds from a post-translocation (POST) complex to a pre-translocation (PRE) complex, thus giving elongation factor G a second chance to translocate the tRNAs correctly. Binds to ribosomes in a GTP-dependent manner. This chain is Elongation factor 4, found in Mycoplasmopsis pulmonis (strain UAB CTIP) (Mycoplasma pulmonis).